A 581-amino-acid chain; its full sequence is DNA primase (581 aa).

Residues 40 to 64 (CPFHNEKTPSFTVNGEKQFYHCFGC) form a CHC2-type zinc finger. The Toprim domain occupies 259–341 (NRLLVVEGYM…GRQLRFMFLP (83 aa)). Mg(2+) contacts are provided by Glu265, Asp309, and Asp311.

This sequence belongs to the DnaG primase family. As to quaternary structure, monomer. Interacts with DnaB. Zn(2+) is required as a cofactor. Mg(2+) serves as cofactor.

The catalysed reaction is ssDNA + n NTP = ssDNA/pppN(pN)n-1 hybrid + (n-1) diphosphate.. Functionally, RNA polymerase that catalyzes the synthesis of short RNA molecules used as primers for DNA polymerase during DNA replication. The polypeptide is DNA primase (Shigella flexneri).